The following is a 155-amino-acid chain: Lectin-like protein EP153R (155 aa).

Over 1-30 (MYFKKKYIGLIDKNCEKKILDDCTTIKICY) the chain is Cytoplasmic. A helical membrane pass occupies residues 31–51 (ILIGILIGTNMITLIYNFIFW). At 52-155 (DHYMTCNKKD…YLPLLFICSK (104 aa)) the chain is on the extracellular side. Cys-66 and Cys-77 are oxidised to a cystine. The tract at residues 66-154 (CPKDWVGYNN…KYLPLLFICS (89 aa)) is lectin-like. Asn-82, Asn-86, Asn-98, Asn-104, Asn-110, Asn-124, Asn-130, and Asn-137 each carry an N-linked (GlcNAc...) asparagine; by host glycan. An intrachain disulfide couples Cys-94 to Cys-153.

Belongs to the asfivirus lectin-like protein family. As to quaternary structure, homodimer.

The protein localises to the host endoplasmic reticulum membrane. Its function is as follows. Down-regulates MHC-I expression by impairing the appropriate configuration or presentation into the plasma membrane of the latter. Participates in viral hemadsorption, which may help viral spread. Reduces the transactivating activity of host TP53, thus inhibiting apoptosis. Non-essential for virus growth in swine macrophage cell cultures. This chain is Lectin-like protein EP153R, found in Ornithodoros (relapsing fever ticks).